Consider the following 703-residue polypeptide: Elongation factor G (703 aa).

The tr-type G domain occupies 7–287 (KFTRNIGIAA…AVMRYLPSPA (281 aa)). GTP contacts are provided by residues 16 to 23 (AHIDAGKT), 84 to 88 (DTPGH), and 138 to 141 (NKMD).

This sequence belongs to the TRAFAC class translation factor GTPase superfamily. Classic translation factor GTPase family. EF-G/EF-2 subfamily.

The protein localises to the cytoplasm. Functionally, catalyzes the GTP-dependent ribosomal translocation step during translation elongation. During this step, the ribosome changes from the pre-translocational (PRE) to the post-translocational (POST) state as the newly formed A-site-bound peptidyl-tRNA and P-site-bound deacylated tRNA move to the P and E sites, respectively. Catalyzes the coordinated movement of the two tRNA molecules, the mRNA and conformational changes in the ribosome. This chain is Elongation factor G, found in Christiangramia forsetii (strain DSM 17595 / CGMCC 1.15422 / KT0803) (Gramella forsetii).